Reading from the N-terminus, the 862-residue chain is DNA mismatch repair protein MutS (862 aa).

Residue 613–620 participates in ATP binding; sequence GPNMAGKS.

This sequence belongs to the DNA mismatch repair MutS family.

Functionally, this protein is involved in the repair of mismatches in DNA. It is possible that it carries out the mismatch recognition step. This protein has a weak ATPase activity. The sequence is that of DNA mismatch repair protein MutS from Desulfitobacterium hafniense (strain Y51).